The following is a 357-amino-acid chain: UDP-N-acetylglucosamine--N-acetylmuramyl-(pentapeptide) pyrophosphoryl-undecaprenol N-acetylglucosamine transferase (357 aa).

Residues 7–9, N119, R159, S187, I241, and Q286 each bind UDP-N-acetyl-alpha-D-glucosamine; that span reads TGG.

The protein belongs to the glycosyltransferase 28 family. MurG subfamily.

The protein resides in the cell inner membrane. It carries out the reaction di-trans,octa-cis-undecaprenyl diphospho-N-acetyl-alpha-D-muramoyl-L-alanyl-D-glutamyl-meso-2,6-diaminopimeloyl-D-alanyl-D-alanine + UDP-N-acetyl-alpha-D-glucosamine = di-trans,octa-cis-undecaprenyl diphospho-[N-acetyl-alpha-D-glucosaminyl-(1-&gt;4)]-N-acetyl-alpha-D-muramoyl-L-alanyl-D-glutamyl-meso-2,6-diaminopimeloyl-D-alanyl-D-alanine + UDP + H(+). Its pathway is cell wall biogenesis; peptidoglycan biosynthesis. In terms of biological role, cell wall formation. Catalyzes the transfer of a GlcNAc subunit on undecaprenyl-pyrophosphoryl-MurNAc-pentapeptide (lipid intermediate I) to form undecaprenyl-pyrophosphoryl-MurNAc-(pentapeptide)GlcNAc (lipid intermediate II). This Nitrosomonas europaea (strain ATCC 19718 / CIP 103999 / KCTC 2705 / NBRC 14298) protein is UDP-N-acetylglucosamine--N-acetylmuramyl-(pentapeptide) pyrophosphoryl-undecaprenol N-acetylglucosamine transferase.